A 906-amino-acid chain; its full sequence is NACHT, LRR and PYD domains-containing protein 1b allele 4 (906 aa).

The segment at 1–22 (MEESPPKQKSNTKVAQHEGQQD) is disordered. Positions 126–435 (QLVIIEGAAG…EFFAAISCIL (310 aa)) constitute an NACHT domain. Residue 132–139 (GAAGIGKS) coordinates ATP. LRR repeat units follow at residues 627–647 (NLEG…QSLC) and 684–704 (SLTE…RMLC). Positions 789-906 (FWGPTGPVAT…FQEHGSRNAR (118 aa)) constitute an FIIND (incomplete) domain.

This sequence belongs to the NLRP family. Expressed in macrophages.

It localises to the cytoplasm. The protein resides in the cytosol. Functionally, probable inactive allele of Nlrp1b, which lacks a CARD domain, suggesting that it is not able to form an inflammasome. Contrary to Nlrp1b allele 1, allele 4 is not activated by B.anthracis lethal toxin and no other activation signal is reported. In Mus musculus (Mouse), this protein is NACHT, LRR and PYD domains-containing protein 1b allele 4.